Consider the following 137-residue polypeptide: Large ribosomal subunit protein uL16 (137 aa).

This sequence belongs to the universal ribosomal protein uL16 family. In terms of assembly, part of the 50S ribosomal subunit.

Functionally, binds 23S rRNA and is also seen to make contacts with the A and possibly P site tRNAs. In Xanthomonas campestris pv. campestris (strain 8004), this protein is Large ribosomal subunit protein uL16.